A 125-amino-acid polypeptide reads, in one-letter code: Phosphoribosyl-AMP cyclohydrolase (125 aa).

Asp-80 lines the Mg(2+) pocket. Cys-81 contributes to the Zn(2+) binding site. Residues Asp-82 and Asp-84 each coordinate Mg(2+). Residues Cys-97 and Cys-104 each contribute to the Zn(2+) site.

It belongs to the PRA-CH family. In terms of assembly, homodimer. The cofactor is Mg(2+). Zn(2+) serves as cofactor.

It is found in the cytoplasm. The catalysed reaction is 1-(5-phospho-beta-D-ribosyl)-5'-AMP + H2O = 1-(5-phospho-beta-D-ribosyl)-5-[(5-phospho-beta-D-ribosylamino)methylideneamino]imidazole-4-carboxamide. Its pathway is amino-acid biosynthesis; L-histidine biosynthesis; L-histidine from 5-phospho-alpha-D-ribose 1-diphosphate: step 3/9. In terms of biological role, catalyzes the hydrolysis of the adenine ring of phosphoribosyl-AMP. This chain is Phosphoribosyl-AMP cyclohydrolase, found in Leifsonia xyli subsp. xyli (strain CTCB07).